We begin with the raw amino-acid sequence, 388 residues long: 1-deoxy-D-xylulose 5-phosphate reductoisomerase (388 aa).

Residues T13, G14, S15, I16, R40, N41, and N124 each contribute to the NADPH site. K125 provides a ligand contact to 1-deoxy-D-xylulose 5-phosphate. E126 lines the NADPH pocket. A Mn(2+)-binding site is contributed by D150. 4 residues coordinate 1-deoxy-D-xylulose 5-phosphate: S151, E152, S176, and H199. Mn(2+) is bound at residue E152. G205 contacts NADPH. S212, N217, K218, and E221 together coordinate 1-deoxy-D-xylulose 5-phosphate. E221 is a Mn(2+) binding site.

It belongs to the DXR family. In terms of assembly, homodimer. Mg(2+) serves as cofactor. It depends on Mn(2+) as a cofactor. Co(2+) is required as a cofactor.

The enzyme catalyses 2-C-methyl-D-erythritol 4-phosphate + NADP(+) = 1-deoxy-D-xylulose 5-phosphate + NADPH + H(+). It functions in the pathway isoprenoid biosynthesis; isopentenyl diphosphate biosynthesis via DXP pathway; isopentenyl diphosphate from 1-deoxy-D-xylulose 5-phosphate: step 1/6. Its activity is regulated as follows. Competitively inhibited by the antibiotic fosmidomycin. In terms of biological role, catalyzes the NADPH-dependent rearrangement and reduction of 1-deoxy-D-xylulose-5-phosphate (DXP) to 2-C-methyl-D-erythritol 4-phosphate (MEP). Cannot use NADH instead of NADPH as the reducing agent. In Zymomonas mobilis subsp. mobilis (strain ATCC 31821 / ZM4 / CP4), this protein is 1-deoxy-D-xylulose 5-phosphate reductoisomerase.